We begin with the raw amino-acid sequence, 327 residues long: MKIEKLGKSSVASSIALLLLSNTVDAAQNITPKREKKVDDKITLYKTTATSDNDKLNIFQILTFNFIKDKSYDKDTLVLKAAGNINSGYKNSNPKDYNYSQFYWGGKYNVSVSSESNDAVNVVDYAPKNQNEEFQVQQTLGYSYGGDINISNGLSGGLNGSKSFSETINYKQESYRTTIDRKTNHKSIGWGVEAHKIMNNGWGPYGRDSYDPTYGNELFLGGDKSSSNAGQNFLPTHQIPLLARGNFNPEFISVLSHKLFDTKKSKIKVTYQREMDRYTNQWNRSHWVGNNYKNQNTVTFTSTYEVDWQNILLKLIGTDSKETNPGV.

The first 26 residues, 1–26 (MKIEKLGKSSVASSIALLLLSNTVDA), serve as a signal peptide directing secretion.

The protein belongs to the aerolysin family. Toxicity requires sequential binding and synergistic association of a class S and a class F component which form heterooligomeric complexes. LukE (class S) associates with LukD (class F). LukD can also associate with HlgA.

The protein resides in the secreted. In terms of biological role, part of a bi-component leucotoxin that acts by forming pores in the membrane of the target cells. LukE-LukD is as effective as the Panton-Valentine leucocidin (PVL) for inducing dermonecrosis when injected in the rabbit skin, but not hemolytic and poorly leucotoxic on human blood cells compared to other leucotoxins expressed by S.aureus. HlgA-LukD is a Ca(2+) channel inducer. The chain is Leucotoxin LukD (lukD) from Staphylococcus aureus.